The chain runs to 311 residues: DNA-directed RNA polymerase subunit alpha (311 aa).

The segment at Met1–Asp227 is alpha N-terminal domain (alpha-NTD). Residues Asp239–Asp311 are alpha C-terminal domain (alpha-CTD).

The protein belongs to the RNA polymerase alpha chain family. In plastids the minimal PEP RNA polymerase catalytic core is composed of four subunits: alpha, beta, beta', and beta''. When a (nuclear-encoded) sigma factor is associated with the core the holoenzyme is formed, which can initiate transcription.

Its subcellular location is the plastid. The protein resides in the chloroplast. It carries out the reaction RNA(n) + a ribonucleoside 5'-triphosphate = RNA(n+1) + diphosphate. Functionally, DNA-dependent RNA polymerase catalyzes the transcription of DNA into RNA using the four ribonucleoside triphosphates as substrates. The polypeptide is DNA-directed RNA polymerase subunit alpha (Pyropia yezoensis (Susabi-nori)).